The chain runs to 101 residues: MIPVYDYLVLGVILFGLSLVGIMLNRKNIILLLVCVELMLLAVNTNFIAFSHYYNEVGGQVFVFFILTVAAAEAAIGLAIVMLLYRNRGNIDVDKMNHLKG.

3 helical membrane passes run 4 to 24 (VYDY…GIML), 29 to 49 (IILL…NFIA), and 61 to 81 (VFVF…LAIV).

Belongs to the complex I subunit 4L family. As to quaternary structure, NDH-1 is composed of 14 different subunits. Subunits NuoA, H, J, K, L, M, N constitute the membrane sector of the complex.

Its subcellular location is the cell inner membrane. It catalyses the reaction a quinone + NADH + 5 H(+)(in) = a quinol + NAD(+) + 4 H(+)(out). NDH-1 shuttles electrons from NADH, via FMN and iron-sulfur (Fe-S) centers, to quinones in the respiratory chain. The immediate electron acceptor for the enzyme in this species is believed to be ubiquinone. Couples the redox reaction to proton translocation (for every two electrons transferred, four hydrogen ions are translocated across the cytoplasmic membrane), and thus conserves the redox energy in a proton gradient. The sequence is that of NADH-quinone oxidoreductase subunit K from Legionella pneumophila (strain Paris).